Reading from the N-terminus, the 209-residue chain is MDGVTVIGHPLVQHKLTIMRKKETSTAGFRRLLKEISTLLCYEVTRDLELTTERIETPLVETDAPVLEGKKLVFASILRAGNGLLEGMLELVPSARVAHIGVYRDHETLQAVEYFFKAPDNINERLVIVVDPMLATGNSAIAAIEKLKERGARNIRFLCLLAAPEGIRNFQGAHPDVPIFTASIDSHLNEKGYIVPGLGDAGDRMYGTK.

5-phospho-alpha-D-ribose 1-diphosphate is bound by residues Arg-79, Arg-104, and 131 to 139 (DPMLATGNS). Uracil contacts are provided by residues Ile-194 and 199-201 (GDA). Residue Asp-200 participates in 5-phospho-alpha-D-ribose 1-diphosphate binding.

The protein belongs to the UPRTase family. Mg(2+) serves as cofactor.

It catalyses the reaction UMP + diphosphate = 5-phospho-alpha-D-ribose 1-diphosphate + uracil. It functions in the pathway pyrimidine metabolism; UMP biosynthesis via salvage pathway; UMP from uracil: step 1/1. Its activity is regulated as follows. Allosterically activated by GTP. In terms of biological role, catalyzes the conversion of uracil and 5-phospho-alpha-D-ribose 1-diphosphate (PRPP) to UMP and diphosphate. The protein is Uracil phosphoribosyltransferase of Rhizobium meliloti (strain 1021) (Ensifer meliloti).